A 410-amino-acid polypeptide reads, in one-letter code: Histone-lysine N-methyltransferase SUV39H2 (410 aa).

Residues tyrosine 47–lysine 105 enclose the Chromo domain. The region spanning phenylalanine 189 to glycine 247 is the Pre-SET domain. Zn(2+)-binding residues include cysteine 191, cysteine 193, cysteine 196, cysteine 201, cysteine 202, cysteine 229, cysteine 233, cysteine 235, and cysteine 239. The SET domain maps to tyrosine 250–glutamine 373. S-adenosyl-L-methionine contacts are provided by residues arginine 261–tryptophan 263, tyrosine 304, and asparagine 330–histidine 331. Position 333 (cysteine 333) interacts with Zn(2+). Phosphoserine is present on residues serine 381, serine 384, and serine 388. A Post-SET domain is found at valine 394–asparagine 410. Cysteine 398, cysteine 400, and cysteine 405 together coordinate Zn(2+).

Belongs to the class V-like SAM-binding methyltransferase superfamily. Histone-lysine methyltransferase family. Suvar3-9 subfamily. Interacts with SMAD5. The large PER complex involved in the histone methylation is composed of at least PER2, CBX3, TRIM28, SUV39H1 and/or SUV39H2; CBX3 mediates the formation of the complex. Ubiquitinated by the DCX(DCAF13) E3 ubiquitin ligase complex, leading to its degradation.

The protein localises to the nucleus. Its subcellular location is the chromosome. It is found in the centromere. It carries out the reaction L-lysyl(9)-[histone H3] + 3 S-adenosyl-L-methionine = N(6),N(6),N(6)-trimethyl-L-lysyl(9)-[histone H3] + 3 S-adenosyl-L-homocysteine + 3 H(+). Its function is as follows. Histone methyltransferase that specifically trimethylates 'Lys-9' of histone H3 using monomethylated H3 'Lys-9' as substrate. H3 'Lys-9' trimethylation represents a specific tag for epigenetic transcriptional repression by recruiting HP1 (CBX1, CBX3 and/or CBX5) proteins to methylated histones. Mainly functions in heterochromatin regions, thereby playing a central role in the establishment of constitutive heterochromatin at pericentric and telomere regions. H3 'Lys-9' trimethylation is also required to direct DNA methylation at pericentric repeats. SUV39H1 is targeted to histone H3 via its interaction with RB1 and is involved in many processes, such as cell cycle regulation, transcriptional repression and regulation of telomere length. May participate in regulation of higher-order chromatin organization during spermatogenesis. Recruited by the large PER complex to the E-box elements of the circadian target genes such as PER2 itself or PER1, contributes to the conversion of local chromatin to a heterochromatin-like repressive state through H3 'Lys-9' trimethylation. This is Histone-lysine N-methyltransferase SUV39H2 (SUV39H2) from Macaca fascicularis (Crab-eating macaque).